The primary structure comprises 2006 residues: Supporter of activation of yellow protein (2006 aa).

Disordered regions lie at residues 1–208 (MNDL…RRVE), 313–347 (MPAKNDAHLSSLSPASASSSSASSSSSSSSSSSLA), 458–564 (EEKP…AQSQ), 744–794 (DTQD…DPAR), 821–916 (DLEG…KSRR), 929–1029 (VSVG…NNNS), 1044–1082 (CSSSSSTSSGAAANQQVIGGSGSSSMLPPTTILSSSDPL), and 1099–1196 (QQLR…SAVA). The span at 10-60 (VAATSSSGSESGTAVESAAATSTAGSAGAAGRPQSNCSANSNAKSVAASST) shows a compositional bias: low complexity. The segment covering 67–81 (VSSTSSPAQRDQQLN) has biased composition (polar residues). Residues 118–128 (SPPPTLPPPTT) show a composition bias toward pro residues. Over residues 129 to 168 (PCDDAPSTTGASASASSASGEAPSAASAAGAAGGPMAATA) the composition is skewed to low complexity. Residues 189-199 (ANPNSNANESQ) show a composition bias toward polar residues. Positions 321–347 (LSSLSPASASSSSASSSSSSSSSSSLA) are enriched in low complexity. Residues 485 to 494 (GGESNSSSQE) are compositionally biased toward polar residues. Over residues 525-534 (SLSKEHDPKI) the composition is skewed to basic and acidic residues. Low complexity predominate over residues 543–563 (ASNGIASGGSKASKASKSAQS). The span at 744–758 (DTQDNNNENHLKRTN) shows a compositional bias: basic and acidic residues. Composition is skewed to polar residues over residues 759-769 (SEGNESPSSRL) and 828-844 (PPTQQQSISTPDQNGAL). Residues 861–870 (PATPQPPPVA) are compositionally biased toward pro residues. 2 stretches are compositionally biased toward basic and acidic residues: residues 936-945 (ADMKAKEKES) and 963-972 (ESPKTRDHRP). Low complexity-rich tracts occupy residues 978–990 (RTTTSTNTNLQPT) and 1018–1029 (SSESESNNNNNS). A compositionally biased stretch (polar residues) spans 1053–1080 (GAAANQQVIGGSGSSSMLPPTTILSSSD). Residues 1103–1112 (SSRPSSISCG) show a composition bias toward low complexity. The segment covering 1147 to 1158 (GRGRGRRSRGGR) has biased composition (basic residues). A compositionally biased stretch (low complexity) spans 1161 to 1173 (GSSSVDRAVSVGG). The interval 1340-1573 (MIQEQVALYL…PPTDLMAQLL (234 aa)) is SAY. The tract at residues 1579-1685 (AVGSDEIKTS…AGSEDEDGNE (107 aa)) is disordered. Low complexity-rich tracts occupy residues 1627–1652 (TASSSSTSSAQSVSSASSGNGSSSDT) and 1660–1677 (FSSTSSCSSSTGASSGAG). Residues 1694 to 1751 (TCGVCLRSQHRNARDMPEAFIRCYTCRKRVHPSCVDMPPRMVGRVRNYNWQCAGCKCC) form a PHD-type 1; degenerate zinc finger. The PHD-type 2; degenerate zinc-finger motif lies at 1753–1796 (KCRSSQRPGKMLYCEQCDRGYHIYCLGLRTVPDGRWSCERCCFC). The segment at 1887-1911 (TSAQTDDSPMPSPGLTTNGGRALSP) is disordered.

It belongs to the SAYP family. Widely expressed. Highly expressed in ovary. Expressed in nursing cells and growing oocytes at all stages of development and accumulates in mature oocytes. Expressed in the nuclei of syncytium blastoderm of early embryos and in the nuclei of different tissues of late embryos, larvae, and adults.

Its subcellular location is the nucleus. It is found in the cytoplasm. The protein localises to the chromosome. Functionally, essential transcription regulator during early development. Coactivates transcription of some euchromatin genes and repress transcription in of euchromatin genes translocated to heterochromatin. This chain is Supporter of activation of yellow protein (e(y)3), found in Drosophila melanogaster (Fruit fly).